The following is a 91-amino-acid chain: Small ribosomal subunit protein uS19 (91 aa).

It belongs to the universal ribosomal protein uS19 family.

In terms of biological role, protein S19 forms a complex with S13 that binds strongly to the 16S ribosomal RNA. This chain is Small ribosomal subunit protein uS19, found in Burkholderia cenocepacia (strain HI2424).